The following is a 1178-amino-acid chain: DNA-directed RNA polymerase subunit beta (1178 aa).

This sequence belongs to the RNA polymerase beta chain family. As to quaternary structure, the RNAP catalytic core consists of 2 alpha, 1 beta, 1 beta' and 1 omega subunit. When a sigma factor is associated with the core the holoenzyme is formed, which can initiate transcription.

The enzyme catalyses RNA(n) + a ribonucleoside 5'-triphosphate = RNA(n+1) + diphosphate. In terms of biological role, DNA-dependent RNA polymerase catalyzes the transcription of DNA into RNA using the four ribonucleoside triphosphates as substrates. This is DNA-directed RNA polymerase subunit beta from Treponema pallidum (strain Nichols).